The sequence spans 168 residues: WAP four-disulfide core domain protein 2 (168 aa).

Positions 1–30 (MPACRLCLLATGLLLGLLLFTPLSATGTRA) are cleaved as a signal peptide. 2 consecutive WAP domains span residues 31 to 74 (EKPG…SKPN) and 119 to 167 (NGEK…TTPK). Intrachain disulfides connect Cys-36–Cys-62, Cys-45–Cys-66, Cys-49–Cys-61, and Cys-55–Cys-70. The segment at 100 to 123 (PLSRGQVSTKPPVVTKEGGNGEKQ) is disordered. Cystine bridges form between Cys-126–Cys-154, Cys-137–Cys-158, Cys-141–Cys-153, and Cys-147–Cys-163.

Homotrimer; disulfide-linked.

The protein localises to the secreted. In terms of biological role, broad range protease inhibitor. The polypeptide is WAP four-disulfide core domain protein 2 (Wfdc2) (Rattus norvegicus (Rat)).